Reading from the N-terminus, the 108-residue chain is Large ribosomal subunit protein uL24 (108 aa).

The protein belongs to the universal ribosomal protein uL24 family. As to quaternary structure, part of the 50S ribosomal subunit.

In terms of biological role, one of two assembly initiator proteins, it binds directly to the 5'-end of the 23S rRNA, where it nucleates assembly of the 50S subunit. Its function is as follows. One of the proteins that surrounds the polypeptide exit tunnel on the outside of the subunit. This chain is Large ribosomal subunit protein uL24, found in Geotalea daltonii (strain DSM 22248 / JCM 15807 / FRC-32) (Geobacter daltonii).